The chain runs to 118 residues: Small ribosomal subunit protein uS13 (118 aa).

The segment at serine 94–lysine 118 is disordered.

This sequence belongs to the universal ribosomal protein uS13 family. In terms of assembly, part of the 30S ribosomal subunit. Forms a loose heterodimer with protein S19. Forms two bridges to the 50S subunit in the 70S ribosome.

In terms of biological role, located at the top of the head of the 30S subunit, it contacts several helices of the 16S rRNA. In the 70S ribosome it contacts the 23S rRNA (bridge B1a) and protein L5 of the 50S subunit (bridge B1b), connecting the 2 subunits; these bridges are implicated in subunit movement. Contacts the tRNAs in the A and P-sites. This is Small ribosomal subunit protein uS13 from Vibrio vulnificus (strain CMCP6).